We begin with the raw amino-acid sequence, 252 residues long: MDFFWERMLNDPQNHFSDDQKEFLNHAKYRVKRNTIFGMLVGFSLPLYLARNKKVTPIRLYATSIIGGLAGNGVAQITTLAYNLSAIRQRDDGFEILRKIQDSLIRQRTTMRQGRFPSSSSEFPPKNSKYQLPGSMPNTGASSSQDPFTNSQSTEKEDAMYSKDNGFEDRSKPASAWEAIRNRNRNTGNNSFPFYEEDSSVKSTDSAFSGQENSEAFPSRTSNLGSEQLDEPISHEQEAFDQLIWNDSSSSK.

Polar residues-rich tracts occupy residues 108–122 (RTTM…SSSE) and 136–153 (MPNT…NSQS). The disordered stretch occupies residues 108–252 (RTTMRQGRFP…LIWNDSSSSK (145 aa)). Residues 154-172 (TEKEDAMYSKDNGFEDRSK) are compositionally biased toward basic and acidic residues. The segment covering 201–226 (VKSTDSAFSGQENSEAFPSRTSNLGS) has biased composition (polar residues).

It is found in the cytoplasm. It localises to the mitochondrion. The protein resides in the nucleus. This is an uncharacterized protein from Schizosaccharomyces pombe (strain 972 / ATCC 24843) (Fission yeast).